The primary structure comprises 129 residues: Large ribosomal subunit protein bL17 (129 aa).

This sequence belongs to the bacterial ribosomal protein bL17 family. In terms of assembly, part of the 50S ribosomal subunit. Contacts protein L32.

This chain is Large ribosomal subunit protein bL17, found in Polynucleobacter asymbioticus (strain DSM 18221 / CIP 109841 / QLW-P1DMWA-1) (Polynucleobacter necessarius subsp. asymbioticus).